The chain runs to 150 residues: UPF0756 membrane protein HDEF_0364 (150 aa).

5 helical membrane passes run 1-21 (MMFFSSTFFVLLLFAILGLIS), 28-48 (ISVVCLFFLSFIYPNLIFPWV), 51-71 (YALKAGILILTIAVLAPIASG), 88-108 (ILGILIGVFVSWLGGRGVSLM), and 123-143 (ILGVAFFKGVPVGPLIAAGLL).

Belongs to the UPF0756 family.

It localises to the cell membrane. The chain is UPF0756 membrane protein HDEF_0364 from Hamiltonella defensa subsp. Acyrthosiphon pisum (strain 5AT).